A 297-amino-acid chain; its full sequence is Nucleotide-binding protein CJA_2809 (297 aa).

8–15 (GLSGSGKT) contacts ATP. A GTP-binding site is contributed by 59-62 (DVRN).

It belongs to the RapZ-like family.

Displays ATPase and GTPase activities. The chain is Nucleotide-binding protein CJA_2809 from Cellvibrio japonicus (strain Ueda107) (Pseudomonas fluorescens subsp. cellulosa).